Reading from the N-terminus, the 307-residue chain is Myeloid-associated differentiation marker-like protein 2 (307 aa).

2 consecutive MARVEL domains span residues 17–154 (AVTS…ARPG) and 159–303 (YMAT…RIRF). The next 7 membrane-spanning stretches (helical) occupy residues 53–73 (FCMAAWGFCFAVSALVVACEF), 90–110 (AFAMLATLLCATAAVLYPLYF), 129–149 (LAASVFAGLLFLAYAVEVALT), 163–183 (VSGLLKIVQAFVACIIFGALV), 198–218 (VAVYSLCFLATVAVVALSVMG), 229–249 (RLVVVYTFLAVLLYLSAAVIW), and 278–298 (LVVAIFTYVNLLLYVVDLAYS).

It belongs to the MAL family.

The protein resides in the membrane. This is Myeloid-associated differentiation marker-like protein 2 (MYADML2) from Homo sapiens (Human).